The chain runs to 284 residues: Bifunctional protein FolD (284 aa).

Residues glycine 165–serine 167 and serine 190 each bind NADP(+).

The protein belongs to the tetrahydrofolate dehydrogenase/cyclohydrolase family. As to quaternary structure, homodimer.

It carries out the reaction (6R)-5,10-methylene-5,6,7,8-tetrahydrofolate + NADP(+) = (6R)-5,10-methenyltetrahydrofolate + NADPH. It catalyses the reaction (6R)-5,10-methenyltetrahydrofolate + H2O = (6R)-10-formyltetrahydrofolate + H(+). It functions in the pathway one-carbon metabolism; tetrahydrofolate interconversion. Catalyzes the oxidation of 5,10-methylenetetrahydrofolate to 5,10-methenyltetrahydrofolate and then the hydrolysis of 5,10-methenyltetrahydrofolate to 10-formyltetrahydrofolate. The chain is Bifunctional protein FolD from Streptococcus equi subsp. equi (strain 4047).